Here is a 40-residue protein sequence, read N- to C-terminus: Photosystem II reaction center protein L (40 aa).

Residues 19–39 (SLYWGLLLIFVLAVLFSNYFF) form a helical membrane-spanning segment.

This sequence belongs to the PsbL family. In terms of assembly, PSII is composed of 1 copy each of membrane proteins PsbA, PsbB, PsbC, PsbD, PsbE, PsbF, PsbH, PsbI, PsbJ, PsbK, PsbL, PsbM, PsbT, PsbX, PsbY, PsbZ, Psb30/Ycf12, at least 3 peripheral proteins of the oxygen-evolving complex and a large number of cofactors. It forms dimeric complexes.

The protein resides in the plastid. It is found in the chloroplast thylakoid membrane. In terms of biological role, one of the components of the core complex of photosystem II (PSII). PSII is a light-driven water:plastoquinone oxidoreductase that uses light energy to abstract electrons from H(2)O, generating O(2) and a proton gradient subsequently used for ATP formation. It consists of a core antenna complex that captures photons, and an electron transfer chain that converts photonic excitation into a charge separation. This subunit is found at the monomer-monomer interface and is required for correct PSII assembly and/or dimerization. The sequence is that of Photosystem II reaction center protein L from Nandina domestica (Heavenly bamboo).